The following is a 337-amino-acid chain: tRNA N6-adenosine threonylcarbamoyltransferase (337 aa).

Fe cation is bound by residues His-111 and His-115. Substrate is bound by residues 134-138 (LVSGG), Asp-167, Gly-180, and Asn-272. Asp-300 is a Fe cation binding site.

Belongs to the KAE1 / TsaD family. Fe(2+) is required as a cofactor.

The protein localises to the cytoplasm. It carries out the reaction L-threonylcarbamoyladenylate + adenosine(37) in tRNA = N(6)-L-threonylcarbamoyladenosine(37) in tRNA + AMP + H(+). In terms of biological role, required for the formation of a threonylcarbamoyl group on adenosine at position 37 (t(6)A37) in tRNAs that read codons beginning with adenine. Is involved in the transfer of the threonylcarbamoyl moiety of threonylcarbamoyl-AMP (TC-AMP) to the N6 group of A37, together with TsaE and TsaB. TsaD likely plays a direct catalytic role in this reaction. This is tRNA N6-adenosine threonylcarbamoyltransferase from Escherichia coli O157:H7.